A 149-amino-acid chain; its full sequence is Transcriptional repressor NrdR (149 aa).

A zinc finger spans residues 3–34 (CPFCAMEETKVIDSRLVSDGYQVRRRRECGYC). The ATP-cone domain occupies 49–139 (PKIIKNDGSR…VYLSFDDINQ (91 aa)).

Belongs to the NrdR family. The cofactor is Zn(2+).

Negatively regulates transcription of bacterial ribonucleotide reductase nrd genes and operons by binding to NrdR-boxes. The protein is Transcriptional repressor NrdR of Histophilus somni (strain 129Pt) (Haemophilus somnus).